The primary structure comprises 373 residues: Exonuclease V (373 aa).

Cys92 lines the [4Fe-4S] cluster pocket. Residues Asp182 and Glu196 each contribute to the Mg(2+) site. [4Fe-4S] cluster-binding residues include Cys343, Cys346, and Cys352.

Belongs to the EXO5 family. As to quaternary structure, monomer; monomeric form has weak exonuclease activity. Homodimer; homodimeric form is unsure but has much higher exonuclease activity, suggesting that it could homodimerize upon DNA-binding. Interacts with the replication protein A (RPA) complex. It depends on [4Fe-4S] cluster as a cofactor. Requires Mg(2+) as cofactor.

It is found in the nucleus. The protein localises to the cytoplasm. Its subcellular location is the cytosol. Functionally, single-stranded DNA (ssDNA) bidirectional exonuclease involved in DNA repair. Probably involved in DNA repair following ultraviolet (UV) irradiation and interstrand cross-links (ICLs) damage. Has both 5'-3' and 3'-5' exonuclease activities with a strong preference for 5'-ends. Acts as a sliding exonuclease that loads at ssDNA ends and then slides along the ssDNA prior to cutting; however the sliding and the 3'-5' exonuclease activities are abolished upon binding to the replication protein A (RPA) complex that enforces 5'-directionality activity. The polypeptide is Exonuclease V (EXO5) (Homo sapiens (Human)).